Reading from the N-terminus, the 469-residue chain is 3-isopropylmalate dehydratase large subunit (469 aa).

Residues cysteine 347, cysteine 407, and cysteine 410 each coordinate [4Fe-4S] cluster.

Belongs to the aconitase/IPM isomerase family. LeuC type 1 subfamily. Heterodimer of LeuC and LeuD. [4Fe-4S] cluster is required as a cofactor.

The catalysed reaction is (2R,3S)-3-isopropylmalate = (2S)-2-isopropylmalate. The protein operates within amino-acid biosynthesis; L-leucine biosynthesis; L-leucine from 3-methyl-2-oxobutanoate: step 2/4. Its function is as follows. Catalyzes the isomerization between 2-isopropylmalate and 3-isopropylmalate, via the formation of 2-isopropylmaleate. This chain is 3-isopropylmalate dehydratase large subunit, found in Prochlorococcus marinus (strain NATL1A).